We begin with the raw amino-acid sequence, 124 residues long: Fluoride-specific ion channel FluC (124 aa).

4 helical membrane passes run 1 to 21, 37 to 57, 69 to 89, and 99 to 119; these read MIALIAAVSAGGIAGTLLRFA, GTLAVNLVGCLLIGLLYGLFL, GLIVGFLGGLTTFSSFSLDTV, and LALGYTSISVVGGLLATWAGL. The Na(+) site is built by G76 and T79.

Belongs to the fluoride channel Fluc/FEX (TC 1.A.43) family.

It localises to the cell inner membrane. It carries out the reaction fluoride(in) = fluoride(out). Its activity is regulated as follows. Na(+) is not transported, but it plays an essential structural role and its presence is essential for fluoride channel function. Functionally, fluoride-specific ion channel. Important for reducing fluoride concentration in the cell, thus reducing its toxicity. This chain is Fluoride-specific ion channel FluC, found in Pseudomonas putida (strain ATCC 700007 / DSM 6899 / JCM 31910 / BCRC 17059 / LMG 24140 / F1).